A 77-amino-acid polypeptide reads, in one-letter code: Putative defensin-like protein 187 (77 aa).

The signal sequence occupies residues 1-19 (MKNSSIMFVLIVVFLISSS). Intrachain disulfides connect Cys-31/Cys-77, Cys-43/Cys-71, and Cys-47/Cys-73.

This sequence belongs to the DEFL family.

It is found in the secreted. In Arabidopsis thaliana (Mouse-ear cress), this protein is Putative defensin-like protein 187 (LCR42).